A 90-amino-acid polypeptide reads, in one-letter code: Acylphosphatase (90 aa).

Residues 5–90 (CVKASVKGIV…WRHIDGFEIK (86 aa)) enclose the Acylphosphatase-like domain. Active-site residues include Arg-20 and Asn-38.

It belongs to the acylphosphatase family.

The catalysed reaction is an acyl phosphate + H2O = a carboxylate + phosphate + H(+). This chain is Acylphosphatase (acyP), found in Photobacterium profundum (strain SS9).